A 158-amino-acid chain; its full sequence is Na(+)/H(+) antiporter subunit E (158 aa).

A run of 2 helical transmembrane segments spans residues 22 to 41 (YTAVDFLIGYVVGIFILFVL) and 54 to 76 (IWAIIKLISLFFKELILANIDVI).

It belongs to the CPA3 antiporters (TC 2.A.63) subunit E family. In terms of assembly, forms a heterooligomeric complex that consists of seven subunits: MrpA, MrpB, MrpC, MrpD, MrpE, MrpF and MrpG.

It is found in the cell membrane. Mnh complex is a Na(+)Li(+)/H(+) antiporter involved in Na(+) and/or Li(+) excretion and Na(+) resistance. Na(+)/H(+) antiport consumes a transmembrane electrical potential, and is thus inferred to be electrogenic. Does not transport K(+), Ca(2+) or Mg(2+). In terms of biological role, mrp complex is a Na(+)/H(+) antiporter involved in Na(+) excretion and Na(+) resistance. In Alkalihalophilus pseudofirmus (strain ATCC BAA-2126 / JCM 17055 / OF4) (Bacillus pseudofirmus), this protein is Na(+)/H(+) antiporter subunit E (mrpE).